A 696-amino-acid polypeptide reads, in one-letter code: SEC14-like protein 5 (696 aa).

The 174-residue stretch at 2-175 (VQRYQSPVRV…YLNELISQGT (174 aa)) folds into the PRELI/MSF1 domain. Residues 178 to 214 (IPRWTPAPVREEDARNQAGPRDPSSLEAHGPRSTLGP) are disordered. In terms of domain architecture, CRAL-TRIO spans 306-482 (PPALLEEFYA…FLGGESVCNV (177 aa)). One can recognise a GOLD domain in the interval 509–653 (SETYHSASVL…KCKLLYYCEV (145 aa)).

In Homo sapiens (Human), this protein is SEC14-like protein 5 (SEC14L5).